The following is a 726-amino-acid chain: Uracil catabolism protein 2 (726 aa).

A DNA-binding region (zn(2)-C6 fungal-type) is located at residues 24–53 (CGVCRKFKTRCDFEPLVGKCHRCNVLRLEC). Disordered regions lie at residues 152-183 (AGMG…FVNG) and 629-681 (SGRL…SGAD). Positions 161-170 (YDDDDDGDDD) are enriched in acidic residues. The segment covering 640 to 679 (RGSPSMTPGFQQSVQSSSALQGSKAGSPQSARSVNSQGSG) has biased composition (polar residues).

This sequence belongs to the URC2 family.

Its subcellular location is the nucleus. In terms of biological role, probable transcriptional activator involved in uracil catabolism. The polypeptide is Uracil catabolism protein 2 (URC2) (Lachancea kluyveri (Yeast)).